Consider the following 382-residue polypeptide: S-adenosylmethionine synthase (382 aa).

ATP is bound at residue His15. Residue Asp17 coordinates Mg(2+). Glu43 contacts K(+). Residues Glu56 and Gln99 each contribute to the L-methionine site. The flexible loop stretch occupies residues Gln99–Arg109. ATP contacts are provided by residues Asp164 to Lys166, Arg230 to Phe231, Asp239, Arg245 to Lys246, Ala262, and Lys266. Asp239 serves as a coordination point for L-methionine. Lys270 contacts L-methionine.

This sequence belongs to the AdoMet synthase family. Homotetramer; dimer of dimers. The cofactor is Mg(2+). K(+) is required as a cofactor.

The protein localises to the cytoplasm. The enzyme catalyses L-methionine + ATP + H2O = S-adenosyl-L-methionine + phosphate + diphosphate. It participates in amino-acid biosynthesis; S-adenosyl-L-methionine biosynthesis; S-adenosyl-L-methionine from L-methionine: step 1/1. In terms of biological role, catalyzes the formation of S-adenosylmethionine (AdoMet) from methionine and ATP. The overall synthetic reaction is composed of two sequential steps, AdoMet formation and the subsequent tripolyphosphate hydrolysis which occurs prior to release of AdoMet from the enzyme. The polypeptide is S-adenosylmethionine synthase (Glaesserella parasuis serovar 5 (strain SH0165) (Haemophilus parasuis)).